An 82-amino-acid chain; its full sequence is Small ribosomal subunit protein bS16 (82 aa).

It belongs to the bacterial ribosomal protein bS16 family.

The sequence is that of Small ribosomal subunit protein bS16 from Haemophilus ducreyi (strain 35000HP / ATCC 700724).